Consider the following 413-residue polypeptide: Elongation factor 1-alpha (413 aa).

GTP-binding positions include 1–7 (HVDSGKS), 77–81 (DAPGH), and 139–142 (NKMD). In terms of domain architecture, tr-type G spans 1–228 (HVDSGKSTTT…DAILPPARPT (228 aa)). Glu-287 and Glu-360 each carry 5-glutamyl glycerylphosphorylethanolamine.

This sequence belongs to the TRAFAC class translation factor GTPase superfamily. Classic translation factor GTPase family. EF-Tu/EF-1A subfamily.

It localises to the cytoplasm. This protein promotes the GTP-dependent binding of aminoacyl-tRNA to the A-site of ribosomes during protein biosynthesis. This is Elongation factor 1-alpha from Heliocheilus albipunctella (Millet head miner).